A 153-amino-acid chain; its full sequence is Aspartate carbamoyltransferase regulatory chain (153 aa).

Zn(2+) is bound by residues cysteine 109, cysteine 114, cysteine 138, and cysteine 141.

This sequence belongs to the PyrI family. Contains catalytic and regulatory chains. Requires Zn(2+) as cofactor.

Involved in allosteric regulation of aspartate carbamoyltransferase. The chain is Aspartate carbamoyltransferase regulatory chain from Vibrio campbellii (strain ATCC BAA-1116).